A 583-amino-acid chain; its full sequence is Ribosomal lysine N-methyltransferase 1 (583 aa).

The 253-residue stretch at 22–274 (EELKFLYTDL…QSRELSNNYG (253 aa)) folds into the SET domain. Residue Y273 participates in S-adenosyl-L-methionine binding. Coiled-coil stretches lie at residues 378 to 407 (KAEE…KLNS) and 433 to 459 (KGQK…ENKH).

Belongs to the class V-like SAM-binding methyltransferase superfamily. RKM1 family.

It is found in the cytoplasm. The protein localises to the nucleus. In terms of biological role, S-adenosyl-L-methionine-dependent protein-lysine N-methyltransferase that monomethylates ribosomal protein S18 (RPS18A and RPS18B) at 'Lys-48' and dimethylates ribosomal protein L23 (RPL23A and RPL23B) at 'Lys-106' and 'Lys-110'. The protein is Ribosomal lysine N-methyltransferase 1 of Saccharomyces cerevisiae (strain ATCC 204508 / S288c) (Baker's yeast).